A 172-amino-acid polypeptide reads, in one-letter code: Small ribosomal subunit protein uS5 (172 aa).

The S5 DRBM domain occupies 11-74; it reads LSEVLVDVNR…QAAKKRMMKV (64 aa).

Belongs to the universal ribosomal protein uS5 family. As to quaternary structure, part of the 30S ribosomal subunit. Contacts proteins S4 and S8.

With S4 and S12 plays an important role in translational accuracy. In terms of biological role, located at the back of the 30S subunit body where it stabilizes the conformation of the head with respect to the body. This is Small ribosomal subunit protein uS5 from Rickettsia canadensis (strain McKiel).